We begin with the raw amino-acid sequence, 739 residues long: Transcription regulator protein BACH1 (739 aa).

The BTB domain maps to 34-100; it reads CDVTVLVEGQ…AYTAKLILSK (67 aa). Position 196 is a phosphoserine (serine 196). Disordered stretches follow at residues 287–321 and 344–391; these read MESE…PHGL and KTVK…RSSV. Basic and acidic residues-rich tracts occupy residues 346-364 and 376-391; these read VKTE…KPSE and PKED…RSSV. Residue serine 448 is modified to Phosphoserine. In terms of domain architecture, bZIP spans 560-623; it reads CIHDIRRRSK…GETKQNLTGL (64 aa). A basic motif region spans residues 565 to 581; it reads RRRSKNRIAAQRCRKRK. The leucine-zipper stretch occupies residues 585–592; it reads IQNLESEI. Positions 679-708 are disordered; sequence PPTAPPPCGRGSSAASQELVQESPPTTAAA. A compositionally biased stretch (low complexity) spans 699-708; the sequence is QESPPTTAAA.

It belongs to the bZIP family. CNC subfamily. As to quaternary structure, heterodimer of BACH1 and MAFK. In terms of processing, ubiquitinated by the SCF(FBXL17) complex or by the by the SCF(FBXO22) complex, leading to its degradation by the proteasome. Under oxidative stress, reactive oxygen species covalently modify cysteine residues on the bZIP domain of BACH1 and release it from chromatin. If the BTB domain of BACH1 remains intact, its beta1-alpha6 degron is recognized by FBXO22, promoting its ubiquitination and degradation. If the structural integrity of the beta1-alpha6 degron is compromised, FBXL17 will transiently associate with the BACH1 BTB dimer and remodel it into stably bound monomer for ubiquitination and degradation. Ubiquitous.

It localises to the nucleus. In terms of biological role, transcriptional regulator that acts as a repressor or activator, depending on the context. Binds to NF-E2 DNA binding sites. Plays important roles in coordinating transcription activation and repression by MAFK. Together with MAF, represses the transcription of genes under the control of the NFE2L2 oxidative stress pathway. This chain is Transcription regulator protein BACH1 (Bach1), found in Mus musculus (Mouse).